A 73-amino-acid chain; its full sequence is UPF0352 protein APJL_0577 (73 aa).

This sequence belongs to the UPF0352 family.

The polypeptide is UPF0352 protein APJL_0577 (Actinobacillus pleuropneumoniae serotype 3 (strain JL03)).